A 90-amino-acid polypeptide reads, in one-letter code: Small ribosomal subunit protein uS19 (90 aa).

It belongs to the universal ribosomal protein uS19 family.

Protein S19 forms a complex with S13 that binds strongly to the 16S ribosomal RNA. The polypeptide is Small ribosomal subunit protein uS19 (Clostridium beijerinckii (strain ATCC 51743 / NCIMB 8052) (Clostridium acetobutylicum)).